Consider the following 148-residue polypeptide: Transcriptional regulator MraZ (148 aa).

SpoVT-AbrB domains follow at residues 5-51 (VSIL…PEPN) and 80-123 (AETL…NAEE).

The protein belongs to the MraZ family. In terms of assembly, forms oligomers.

The protein resides in the cytoplasm. The protein localises to the nucleoid. This chain is Transcriptional regulator MraZ, found in Chromobacterium violaceum (strain ATCC 12472 / DSM 30191 / JCM 1249 / CCUG 213 / NBRC 12614 / NCIMB 9131 / NCTC 9757 / MK).